The chain runs to 324 residues: Bile salt hydrolase/transferase (324 aa).

Residue C2 is the Nucleophile; acyl-thioester intermediate of the active site. C2 and R16 together coordinate deoxycholate. N79 provides a ligand contact to taurine.

Belongs to the peptidase C59 family. As to quaternary structure, homotetramer. The tetramer consists of a dimer of dimers.

The catalysed reaction is glycocholate + H2O = cholate + glycine. It catalyses the reaction glycodeoxycholate + H2O = deoxycholate + glycine. The enzyme catalyses chenodeoxycholate + glycine = glycochenodeoxycholate + H2O. It carries out the reaction cholate + taurine = taurocholate + H2O. The catalysed reaction is taurodeoxycholate + H2O = deoxycholate + taurine. It catalyses the reaction taurochenodeoxycholate + H2O = chenodeoxycholate + taurine. The enzyme catalyses an L-alpha-amino acid + cholate = an N-choloyl-L-alpha-amino acid + H2O. It carries out the reaction an L-alpha-amino acid + taurocholate = an N-choloyl-L-alpha-amino acid + taurine. The catalysed reaction is glycocholate + an L-alpha-amino acid = an N-choloyl-L-alpha-amino acid + glycine. Its pathway is lipid metabolism; bile acid biosynthesis. Its function is as follows. Possesses dual functions in bile acid metabolism. Acts as a bile salt hydrolase that catalyzes the deconjugation of glycine- and taurine-linked bile salts, which occurs naturally in the intestines of animals, releasing amino acid residues and deconjugated bile salts (bile acids). Can hydrolyze the amide bond in the bile salts glycocholate (GCA), glycodeoxycholate (GDCA), glycochenodeoxycholate (GCDCA), taurocholate (TCA), taurodeoxycholate (TDCA) and taurochenodeoxycholate (TCDCA). Shows a preference for glycine-conjugated bile acids as substrates. Also acts as an amine N-acyltransferase that conjugates a wide variety of amino acids to conjugated and non-conjugated bile acids, thus producing bacterial bile acid amidates (BBAAs) - also named microbially conjugated bile acids (MCBAs) - in the gastrointestinal tract. These BBAAs may facilitate communication between the microbiota and host through the activation of host ligand-activated transcription factors. The chain is Bile salt hydrolase/transferase from Lactiplantibacillus plantarum (strain ATCC BAA-793 / NCIMB 8826 / WCFS1) (Lactobacillus plantarum).